Reading from the N-terminus, the 126-residue chain is Cysteine-rich tail protein 1 (126 aa).

Residues 1-89 are disordered; sequence MDPHETLVKN…PAGLAYAGPP (89 aa).

The protein belongs to the CYSRT1 family. As to quaternary structure, interacts with components of the late cornfied envelope (LCE).

Its subcellular location is the cornified envelope. Its function is as follows. Component of the stratum corneum that may contribute to epidermal antimicrobial host defenses. This is Cysteine-rich tail protein 1 (CYSRT1) from Bos taurus (Bovine).